Consider the following 499-residue polypeptide: Beta-amylase (499 aa).

Residues Asp-55, His-95, and Asp-103 each coordinate substrate. Glu-188 serves as the catalytic Proton donor. 3 residues coordinate substrate: Lys-298, His-303, and Thr-345. Glu-383 acts as the Proton acceptor in catalysis. Residues 384-385 (NA) and Arg-423 each bind substrate.

Belongs to the glycosyl hydrolase 14 family. In terms of assembly, homotetramer.

The enzyme catalyses Hydrolysis of (1-&gt;4)-alpha-D-glucosidic linkages in polysaccharides so as to remove successive maltose units from the non-reducing ends of the chains.. This Ipomoea batatas (Sweet potato) protein is Beta-amylase (BMY1).